Here is a 288-residue protein sequence, read N- to C-terminus: uncharacterized protein (288 aa).

The segment covering 126–136 (VAAPASTPVAP) has biased composition (low complexity). 2 disordered regions span residues 126–227 (VAAP…VTSV) and 258–288 (KEKDQTAEESQEQPSLSLEETLVHDRISSEE). A compositionally biased stretch (basic and acidic residues) spans 143-152 (RKEFKNEKWK). The segment covering 153-162 (DKKKQGRRRN) has biased composition (basic residues). Residues 180-194 (VAEECLQESSSEEGD) are compositionally biased toward acidic residues. Residues 278 to 288 (TLVHDRISSEE) show a composition bias toward basic and acidic residues.

It belongs to the chlamydial CPn_0623/CT_504/TC_0791 family.

This is an uncharacterized protein from Chlamydia trachomatis serovar D (strain ATCC VR-885 / DSM 19411 / UW-3/Cx).